A 1017-amino-acid polypeptide reads, in one-letter code: Disease resistance protein RML1B (1017 aa).

The TIR domain occupies 12 to 176; the sequence is YKFNVFASFH…KIARDVLDKL (165 aa). Glu-87 is a catalytic residue. The NB-ARC domain occupies 191 to 447; that stretch reads EAHLREIKSL…HIAIFFNKED (257 aa). LRR repeat units follow at residues 539–562, 583–605, 606–628, 629–652, 654–675, 676–698, 699–724, 738–760, 761–782, and 784–809; these read ISRI…QFLK, PCLL…TFNP, EHLV…TQPL, KNLK…SNAT, LEYL…ISHL, HKLE…HMNL, ESLQ…NIRY, CPGL…THLP, TSLT…CFKS, and HQLK…SLLT.

The catalysed reaction is NAD(+) + H2O = ADP-D-ribose + nicotinamide + H(+). Functionally, TIR-NB-LRR receptor-like protein that confers resistance to the pathogen Leptosphaeria maculans (blackleg disease). The polypeptide is Disease resistance protein RML1B (Arabidopsis thaliana (Mouse-ear cress)).